The following is a 90-amino-acid chain: Small ribosomal subunit protein uS15 (90 aa).

The protein belongs to the universal ribosomal protein uS15 family. Part of the 30S ribosomal subunit. Forms a bridge to the 50S subunit in the 70S ribosome, contacting the 23S rRNA.

In terms of biological role, one of the primary rRNA binding proteins, it binds directly to 16S rRNA where it helps nucleate assembly of the platform of the 30S subunit by binding and bridging several RNA helices of the 16S rRNA. Forms an intersubunit bridge (bridge B4) with the 23S rRNA of the 50S subunit in the ribosome. The sequence is that of Small ribosomal subunit protein uS15 from Campylobacter jejuni subsp. jejuni serotype O:6 (strain 81116 / NCTC 11828).